We begin with the raw amino-acid sequence, 499 residues long: MSEVRVRFCPSPTGTPHVGMVRTALFNWAYARHTGGKLIFRIEDTDAQRDTEESYQAIIDSLKWLGLDWDEGIETGGPHEPYRQSQRMDIYAEVLEKLKAAGEVYPAYSTPEEVEERHKAAGRDPKLGYDNYDRDLTEEQIAAFEAEGRKPVWRLKMDHDRRYTWTDLVRGEMDVDGKTMPDFVVARSNGQPLYTLVNPLDDALMGITHVLRGEDLLPSTPRQIALYEALIRIGVAKEVPTFAHLPFVTGEGNRKLSKRDPESNLFNHRDAGVIPEGMLNYLSLLGWSLSADEDIFTMAQLIENFDIADVKPNPARFDHKKMEAINADHIRMLDLADFTQRLRTYLEEFKGWPADYPADKFAFAAELVQTRIKVLGDADGLLRFLLTKDEDLELEPKAARKNLKEAAKEPLEAAIEELEAIAEEDFRTEPIEQALSTRLIEQMELKPRVAYGALRVAICGQAVSPPLFESMELLGKDSTLVRLRAGLEQTPFQAEQPAN.

The short motif at 10–20 (PSPTGTPHVGM) is the 'HIGH' region element. The short motif at 255–259 (KLSKR) is the 'KMSKS' region element. Position 258 (K258) interacts with ATP.

This sequence belongs to the class-I aminoacyl-tRNA synthetase family. Glutamate--tRNA ligase type 1 subfamily. As to quaternary structure, monomer.

The protein localises to the cytoplasm. The catalysed reaction is tRNA(Glu) + L-glutamate + ATP = L-glutamyl-tRNA(Glu) + AMP + diphosphate. Its function is as follows. Catalyzes the attachment of glutamate to tRNA(Glu) in a two-step reaction: glutamate is first activated by ATP to form Glu-AMP and then transferred to the acceptor end of tRNA(Glu). This chain is Glutamate--tRNA ligase, found in Corynebacterium urealyticum (strain ATCC 43042 / DSM 7109).